The chain runs to 702 residues: Ribosomal RNA large subunit methyltransferase K/L (702 aa).

One can recognise a THUMP domain in the interval 43 to 154; sequence LVYQSLMWSR…KETASIALDL (112 aa).

This sequence belongs to the methyltransferase superfamily. RlmKL family.

The protein resides in the cytoplasm. The catalysed reaction is guanosine(2445) in 23S rRNA + S-adenosyl-L-methionine = N(2)-methylguanosine(2445) in 23S rRNA + S-adenosyl-L-homocysteine + H(+). It carries out the reaction guanosine(2069) in 23S rRNA + S-adenosyl-L-methionine = N(2)-methylguanosine(2069) in 23S rRNA + S-adenosyl-L-homocysteine + H(+). Functionally, specifically methylates the guanine in position 2445 (m2G2445) and the guanine in position 2069 (m7G2069) of 23S rRNA. The polypeptide is Ribosomal RNA large subunit methyltransferase K/L (Escherichia coli O6:K15:H31 (strain 536 / UPEC)).